Consider the following 470-residue polypeptide: ATP synthase subunit beta (470 aa).

Position 155 to 162 (155 to 162 (GGAGVGKT)) interacts with ATP.

Belongs to the ATPase alpha/beta chains family. F-type ATPases have 2 components, CF(1) - the catalytic core - and CF(0) - the membrane proton channel. CF(1) has five subunits: alpha(3), beta(3), gamma(1), delta(1), epsilon(1). CF(0) has three main subunits: a(1), b(2) and c(9-12). The alpha and beta chains form an alternating ring which encloses part of the gamma chain. CF(1) is attached to CF(0) by a central stalk formed by the gamma and epsilon chains, while a peripheral stalk is formed by the delta and b chains.

It is found in the cell membrane. The catalysed reaction is ATP + H2O + 4 H(+)(in) = ADP + phosphate + 5 H(+)(out). Produces ATP from ADP in the presence of a proton gradient across the membrane. The catalytic sites are hosted primarily by the beta subunits. This chain is ATP synthase subunit beta, found in Staphylococcus epidermidis (strain ATCC 35984 / DSM 28319 / BCRC 17069 / CCUG 31568 / BM 3577 / RP62A).